We begin with the raw amino-acid sequence, 704 residues long: Elongation factor G 1 (704 aa).

Residues 8–291 (ERYRNIGISA…AVIDYLPSPA (284 aa)) form the tr-type G domain. GTP-binding positions include 17–24 (AHIDAGKT), 88–92 (DTPGH), and 142–145 (NKMD).

Belongs to the TRAFAC class translation factor GTPase superfamily. Classic translation factor GTPase family. EF-G/EF-2 subfamily.

The protein localises to the cytoplasm. Functionally, catalyzes the GTP-dependent ribosomal translocation step during translation elongation. During this step, the ribosome changes from the pre-translocational (PRE) to the post-translocational (POST) state as the newly formed A-site-bound peptidyl-tRNA and P-site-bound deacylated tRNA move to the P and E sites, respectively. Catalyzes the coordinated movement of the two tRNA molecules, the mRNA and conformational changes in the ribosome. The polypeptide is Elongation factor G 1 (Burkholderia mallei (strain ATCC 23344)).